The primary structure comprises 189 residues: Dynactin subunit 6 (189 aa).

This sequence belongs to the dynactin subunits 5/6 family. Dynactin subunit 6 subfamily. As to quaternary structure, subunit of dynactin, a multiprotein complex part of a tripartite complex with dynein and a adapter, such as BICDL1, BICD2 or HOOK3. The dynactin complex is built around ACTR1A/ACTB filament and consists of an actin-related filament composed of a shoulder domain, a pointed end and a barbed end.

It localises to the cytoplasm. The protein resides in the cytoskeleton. Functionally, part of the dynactin complex that activates the molecular motor dynein for ultra-processive transport along microtubules. The chain is Dynactin subunit 6 (dynF) from Dictyostelium discoideum (Social amoeba).